The chain runs to 512 residues: Kelch repeat protein C2 (512 aa).

Residues 2–67 (ESVIFSINGE…IRWKKINITI (66 aa)) enclose the BTB domain. The 75-residue stretch at 102–176 (CIRMFNFSKR…LLKWIHKNPN (75 aa)) folds into the BACK domain. 6 Kelch repeats span residues 216-261 (IKHN…LHNC), 262-307 (LYII…VNDG), 309-354 (LYVI…FVND), 356-403 (IYVM…EYDG), 405-449 (IYVI…SCGD), and 452-498 (LIIA…THKS).

Belongs to the poxviruses Kelch family.

The sequence is that of Kelch repeat protein C2 from Vaccinia virus (strain Western Reserve) (VACV).